Consider the following 201-residue polypeptide: MKNCLKIIHWDRCSIEEREKILSRPILDDLSAIKKQVKTIISDVNSLGDQALYNYTNIFDKIKLNNIKISHQDLVKAELCIDVKAKNAIQVAIDNIRTFHISQNISTLNIEINKGIYCQQIVRPIGSVGLYIPGGSAPLLSTVLMLAIPARIAGCKKIVLCSPPPITNEVLYASKICGVQEIFQVGGAQAIAALGFGTETI.

This sequence belongs to the histidinol dehydrogenase family. In terms of assembly, homodimer. Zn(2+) serves as cofactor.

The catalysed reaction is L-histidinol + 2 NAD(+) + H2O = L-histidine + 2 NADH + 3 H(+). It participates in amino-acid biosynthesis; L-histidine biosynthesis; L-histidine from 5-phospho-alpha-D-ribose 1-diphosphate: step 9/9. Its function is as follows. Catalyzes the sequential NAD-dependent oxidations of L-histidinol to L-histidinaldehyde and then to L-histidine. The protein is Histidinol dehydrogenase (hisD) of Buchnera aphidicola subsp. Melaphis rhois.